We begin with the raw amino-acid sequence, 97 residues long: Peptide YY-A (97 aa).

The N-terminal stretch at 1–28 is a signal peptide; that stretch reads MAVMLKPWTVVATVLICVLLCLGTFVDA. The residue at position 64 (Tyr64) is a Tyrosine amide. Residues 68–97 constitute a propeptide, C-terminal extension; that stretch reads STSEDVMAELLFGDDTEHKQRSRYDDSFMW.

The protein belongs to the NPY family. As to expression, mainly expressed in brainstem neurons, and in the telencephalon. Also expressed in intestinal endocrine cells.

Its subcellular location is the secreted. The chain is Peptide YY-A (pyya) from Danio rerio (Zebrafish).